We begin with the raw amino-acid sequence, 1899 residues long: Protocadherin-15 (1899 aa).

An N-terminal signal peptide occupies residues 1-26 (MLQQFCLWKWLAVGIAVATILASSLA). Residues 27–1376 (QNDEDCKLAR…AQAVGYTEGA (1350 aa)) lie on the Extracellular side of the membrane. The cysteines at positions 32 and 120 are disulfide-linked. Cadherin domains lie at 38 to 147 (GPPA…SPQF), 148 to 265 (QQQR…GPMF), 278 to 395 (RPLT…KPYF), 396 to 509 (TKST…SPTF), 510 to 616 (SNIS…PPRF), 617 to 717 (PQLM…GPVF), 719 to 819 (MFLP…SPVF), 820 to 926 (TNAS…SPVF), 927 to 1035 (SKTL…IPRF), 1037 to 1144 (QDEY…APVF), and 1145 to 1259 (TKKM…PPTL). A helical transmembrane segment spans residues 1377 to 1397 (LLALAVIIILCCMPAILIVMV). The Cytoplasmic portion of the chain corresponds to 1398–1899 (SYRQRQAECA…KRFPSQSTAL (502 aa)). Disordered stretches follow at residues 1668 to 1687 (SPCLRSSPLSSPTPCEVVEP), 1700 to 1721 (HDYPEELSPPPTRKPTPPSFRI), and 1734 to 1820 (TKGE…RREL). 2 stretches are compositionally biased toward pro residues: residues 1706–1717 (LSPPPTRKPTPP) and 1743–1773 (PDPPKTPPPPPPLLPPPPPSPPLLPPHPPTL). Low complexity predominate over residues 1774-1791 (PLASVPSSSSLPSTQHLS). The span at 1804 to 1814 (AVPPPAAVPEP) shows a compositional bias: pro residues.

In the utricle, localizes to the distal region of the kinocilium and near the tips of the stereocilia.

Its subcellular location is the cell membrane. Its function is as follows. Calcium-dependent cell-adhesion protein. Required for inner ear neuroepithelial cell elaboration and cochlear function. Probably involved in the maintenance of normal retinal function. This is Protocadherin-15 (Pcdh15) from Gallus gallus (Chicken).